The chain runs to 309 residues: Protein FdhE homolog (309 aa).

It belongs to the FdhE family.

The protein localises to the cytoplasm. Functionally, necessary for formate dehydrogenase activity. The polypeptide is Protein FdhE homolog (Cronobacter sakazakii (strain ATCC BAA-894) (Enterobacter sakazakii)).